Consider the following 600-residue polypeptide: Glutamine--fructose-6-phosphate aminotransferase [isomerizing] (600 aa).

Residue Cys-2 is the Nucleophile; for GATase activity of the active site. Positions Cys-2–Asp-217 constitute a Glutamine amidotransferase type-2 domain. 2 SIS domains span residues Ile-283–Ile-422 and Ile-452–Pro-590. Lys-595 serves as the catalytic For Fru-6P isomerization activity.

Homodimer.

It localises to the cytoplasm. The enzyme catalyses D-fructose 6-phosphate + L-glutamine = D-glucosamine 6-phosphate + L-glutamate. Functionally, catalyzes the first step in hexosamine metabolism, converting fructose-6P into glucosamine-6P using glutamine as a nitrogen source. This is Glutamine--fructose-6-phosphate aminotransferase [isomerizing] (glmS) from Bacillus spizizenii (strain ATCC 23059 / NRRL B-14472 / W23) (Bacillus subtilis subsp. spizizenii).